We begin with the raw amino-acid sequence, 70 residues long: Conotoxin Cal6.11 (70 aa).

An N-terminal signal peptide occupies residues 1 to 22 (MKLTCVLIIAVLILTACQFIAA). Residues 23 to 43 (DNTEYRKWRRSGTSTGMRLGS) constitute a propeptide that is removed on maturation. Cystine bridges form between cysteine 46–cysteine 57, cysteine 50–cysteine 62, and cysteine 56–cysteine 69. 4-hydroxyproline occurs at positions 48 and 58. 2 positions are modified to 4-carboxyglutamate: glutamate 60 and glutamate 67.

Belongs to the conotoxin O1 superfamily. In terms of tissue distribution, expressed by the venom duct.

It is found in the secreted. Functionally, probable neurotoxin with unknown target. Possibly targets ion channels. This Californiconus californicus (California cone) protein is Conotoxin Cal6.11.